Reading from the N-terminus, the 586-residue chain is Methionine--tRNA ligase, mitochondrial (586 aa).

The transit peptide at 1-46 directs the protein to the mitochondrion; sequence MLRQCARWVLTRTRFGRGCRRYGSCSPSASGDAGEARAYFTTPIFY. The 'HIGH' region motif lies at 45–55; it reads FYVNAAPHIGH. The 'KMSKS' region signature appears at 340-344; it reads KMSKS. Lysine 343 contributes to the ATP binding site.

This sequence belongs to the class-I aminoacyl-tRNA synthetase family.

It is found in the mitochondrion matrix. The enzyme catalyses tRNA(Met) + L-methionine + ATP = L-methionyl-tRNA(Met) + AMP + diphosphate. This Mus musculus (Mouse) protein is Methionine--tRNA ligase, mitochondrial (Mars2).